Reading from the N-terminus, the 356-residue chain is D-alanine--D-alanine ligase (356 aa).

The region spanning Lys-134–Glu-339 is the ATP-grasp domain. Residue Lys-167–Glu-222 participates in ATP binding. 3 residues coordinate Mg(2+): Asp-293, Glu-306, and Asn-308.

This sequence belongs to the D-alanine--D-alanine ligase family. The cofactor is Mg(2+). Requires Mn(2+) as cofactor.

The protein resides in the cytoplasm. The catalysed reaction is 2 D-alanine + ATP = D-alanyl-D-alanine + ADP + phosphate + H(+). The protein operates within cell wall biogenesis; peptidoglycan biosynthesis. Cell wall formation. In Staphylococcus carnosus (strain TM300), this protein is D-alanine--D-alanine ligase.